The chain runs to 181 residues: Cytochrome b6-f complex iron-sulfur subunit (181 aa).

Positions 1–35 (MAQTGNFKSPARMSSLGQGAAPASAGAVTGGKPRE) are disordered. Transmembrane regions (helical) follow at residues 53-73 (VGGV…RYIV) and 114-134 (GGSL…VHWD). The Rieske domain maps to 85–178 (LAVGPASDVP…VKIEDGKIVV (94 aa)). Cys124, His126, Cys142, and His145 together coordinate [2Fe-2S] cluster. Cys129 and Cys144 are joined by a disulfide.

It belongs to the Rieske iron-sulfur protein family. Requires [2Fe-2S] cluster as cofactor.

The protein resides in the cell inner membrane. The catalysed reaction is 2 oxidized [plastocyanin] + a plastoquinol + 2 H(+)(in) = 2 reduced [plastocyanin] + a plastoquinone + 4 H(+)(out). Its function is as follows. Component of the green S-bacteria bc-complex which consists of the Rieske protein and cytochrome b subunit and which appears to lack a cytochrome c1-equivalent. This complex has a comparatively low redox potential. This Chlorobaculum tepidum (strain ATCC 49652 / DSM 12025 / NBRC 103806 / TLS) (Chlorobium tepidum) protein is Cytochrome b6-f complex iron-sulfur subunit (petC).